Reading from the N-terminus, the 57-residue chain is Large ribosomal subunit protein bL32 (57 aa).

The protein belongs to the bacterial ribosomal protein bL32 family.

The polypeptide is Large ribosomal subunit protein bL32 (Mycolicibacterium gilvum (strain PYR-GCK) (Mycobacterium gilvum (strain PYR-GCK))).